Consider the following 194-residue polypeptide: MGMYKYIREAWKSPKKSYVGQLLKQRMIKWRREPAVVRIERPTRLDRARALGYQAKQGYVIVRVRVRRGGRKRPRWKGGRKPSKMGQVKYSPKKSLQWIAEEKAARKFPNLEVLNSYWVGEDGMYKWFEVIMVDPHHPVIKSDPKIAWIALKHHKGRVFRGLTSAGKKGRGLRNKGKGAEKIRPSIRANEGKGK.

The tract at residues 164 to 194 (SAGKKGRGLRNKGKGAEKIRPSIRANEGKGK) is disordered. A compositionally biased stretch (basic residues) spans 167-176 (KKGRGLRNKG). Over residues 177–194 (KGAEKIRPSIRANEGKGK) the composition is skewed to basic and acidic residues.

The protein belongs to the eukaryotic ribosomal protein eL15 family.

The protein is Large ribosomal subunit protein eL15 (rpl15e) of Pyrococcus abyssi (strain GE5 / Orsay).